The following is a 535-amino-acid chain: Bifunctional purine biosynthesis protein PurH (535 aa).

Positions 6–151 (TRLPIRRALI…KNHKDVAIVV (146 aa)) constitute an MGS-like domain.

The protein belongs to the PurH family.

The enzyme catalyses (6R)-10-formyltetrahydrofolate + 5-amino-1-(5-phospho-beta-D-ribosyl)imidazole-4-carboxamide = 5-formamido-1-(5-phospho-D-ribosyl)imidazole-4-carboxamide + (6S)-5,6,7,8-tetrahydrofolate. It catalyses the reaction IMP + H2O = 5-formamido-1-(5-phospho-D-ribosyl)imidazole-4-carboxamide. It functions in the pathway purine metabolism; IMP biosynthesis via de novo pathway; 5-formamido-1-(5-phospho-D-ribosyl)imidazole-4-carboxamide from 5-amino-1-(5-phospho-D-ribosyl)imidazole-4-carboxamide (10-formyl THF route): step 1/1. The protein operates within purine metabolism; IMP biosynthesis via de novo pathway; IMP from 5-formamido-1-(5-phospho-D-ribosyl)imidazole-4-carboxamide: step 1/1. The sequence is that of Bifunctional purine biosynthesis protein PurH from Pseudomonas entomophila (strain L48).